Here is a 364-residue protein sequence, read N- to C-terminus: tRNA 2-selenouridine synthase (364 aa).

One can recognise a Rhodanese domain in the interval 14–137 (LIADTPIIDV…LRQTAIQATI (124 aa)). C97 acts as the S-selanylcysteine intermediate in catalysis.

This sequence belongs to the SelU family. As to quaternary structure, monomer.

The enzyme catalyses 5-methylaminomethyl-2-thiouridine(34) in tRNA + selenophosphate + (2E)-geranyl diphosphate + H2O + H(+) = 5-methylaminomethyl-2-selenouridine(34) in tRNA + (2E)-thiogeraniol + phosphate + diphosphate. It catalyses the reaction 5-methylaminomethyl-2-thiouridine(34) in tRNA + (2E)-geranyl diphosphate = 5-methylaminomethyl-S-(2E)-geranyl-thiouridine(34) in tRNA + diphosphate. The catalysed reaction is 5-methylaminomethyl-S-(2E)-geranyl-thiouridine(34) in tRNA + selenophosphate + H(+) = 5-methylaminomethyl-2-(Se-phospho)selenouridine(34) in tRNA + (2E)-thiogeraniol. It carries out the reaction 5-methylaminomethyl-2-(Se-phospho)selenouridine(34) in tRNA + H2O = 5-methylaminomethyl-2-selenouridine(34) in tRNA + phosphate. Functionally, involved in the post-transcriptional modification of the uridine at the wobble position (U34) of tRNA(Lys), tRNA(Glu) and tRNA(Gln). Catalyzes the conversion of 2-thiouridine (S2U-RNA) to 2-selenouridine (Se2U-RNA). Acts in a two-step process involving geranylation of 2-thiouridine (S2U) to S-geranyl-2-thiouridine (geS2U) and subsequent selenation of the latter derivative to 2-selenouridine (Se2U) in the tRNA chain. The protein is tRNA 2-selenouridine synthase of Escherichia coli O17:K52:H18 (strain UMN026 / ExPEC).